A 345-amino-acid polypeptide reads, in one-letter code: Holliday junction branch migration complex subunit RuvB (345 aa).

The interval 1–22 (MIETDALSGGTPRRLVTQQPLS) is disordered. Residues 4–193 (TDALSGGTPR…FGIVARLEFY (190 aa)) form a large ATPase domain (RuvB-L) region. Residues Leu-32, Arg-33, Gly-74, Lys-77, Thr-78, Thr-79, 140-142 (EDY), Arg-183, Tyr-193, and Arg-230 each bind ATP. Thr-78 is a Mg(2+) binding site. Residues 194-264 (TPEELTRIVR…VADAALSMLD (71 aa)) are small ATPAse domain (RuvB-S). A head domain (RuvB-H) region spans residues 267-345 (PAGLDVMDRK…HFGFVPPERV (79 aa)). Positions 322 and 327 each coordinate DNA.

The protein belongs to the RuvB family. Homohexamer. Forms an RuvA(8)-RuvB(12)-Holliday junction (HJ) complex. HJ DNA is sandwiched between 2 RuvA tetramers; dsDNA enters through RuvA and exits via RuvB. An RuvB hexamer assembles on each DNA strand where it exits the tetramer. Each RuvB hexamer is contacted by two RuvA subunits (via domain III) on 2 adjacent RuvB subunits; this complex drives branch migration. In the full resolvosome a probable DNA-RuvA(4)-RuvB(12)-RuvC(2) complex forms which resolves the HJ.

The protein resides in the cytoplasm. It catalyses the reaction ATP + H2O = ADP + phosphate + H(+). In terms of biological role, the RuvA-RuvB-RuvC complex processes Holliday junction (HJ) DNA during genetic recombination and DNA repair, while the RuvA-RuvB complex plays an important role in the rescue of blocked DNA replication forks via replication fork reversal (RFR). RuvA specifically binds to HJ cruciform DNA, conferring on it an open structure. The RuvB hexamer acts as an ATP-dependent pump, pulling dsDNA into and through the RuvAB complex. RuvB forms 2 homohexamers on either side of HJ DNA bound by 1 or 2 RuvA tetramers; 4 subunits per hexamer contact DNA at a time. Coordinated motions by a converter formed by DNA-disengaged RuvB subunits stimulates ATP hydrolysis and nucleotide exchange. Immobilization of the converter enables RuvB to convert the ATP-contained energy into a lever motion, pulling 2 nucleotides of DNA out of the RuvA tetramer per ATP hydrolyzed, thus driving DNA branch migration. The RuvB motors rotate together with the DNA substrate, which together with the progressing nucleotide cycle form the mechanistic basis for DNA recombination by continuous HJ branch migration. Branch migration allows RuvC to scan DNA until it finds its consensus sequence, where it cleaves and resolves cruciform DNA. The protein is Holliday junction branch migration complex subunit RuvB of Laribacter hongkongensis (strain HLHK9).